Here is a 72-residue protein sequence, read N- to C-terminus: Translation initiation factor IF-1 (72 aa).

The S1-like domain maps to 1 to 72 (MAKDDVIEVE…TRGRITYRYK (72 aa)). Phosphotyrosine is present on tyrosine 60.

It belongs to the IF-1 family. In terms of assembly, component of the 30S ribosomal translation pre-initiation complex which assembles on the 30S ribosome in the order IF-2 and IF-3, IF-1 and N-formylmethionyl-tRNA(fMet); mRNA recruitment can occur at any time during PIC assembly.

It is found in the cytoplasm. In terms of biological role, one of the essential components for the initiation of protein synthesis. Stabilizes the binding of IF-2 and IF-3 on the 30S subunit to which N-formylmethionyl-tRNA(fMet) subsequently binds. Helps modulate mRNA selection, yielding the 30S pre-initiation complex (PIC). Upon addition of the 50S ribosomal subunit IF-1, IF-2 and IF-3 are released leaving the mature 70S translation initiation complex. The sequence is that of Translation initiation factor IF-1 from Bacillus pumilus (strain SAFR-032).